We begin with the raw amino-acid sequence, 789 residues long: Glycerol-3-phosphate acyltransferase (789 aa).

The HXXXXD motif motif lies at His-276 to Asp-281.

This sequence belongs to the GPAT/DAPAT family.

The protein resides in the cell membrane. The enzyme catalyses sn-glycerol 3-phosphate + an acyl-CoA = a 1-acyl-sn-glycero-3-phosphate + CoA. It functions in the pathway phospholipid metabolism; CDP-diacylglycerol biosynthesis; CDP-diacylglycerol from sn-glycerol 3-phosphate: step 1/3. This Mycobacterium bovis (strain ATCC BAA-935 / AF2122/97) protein is Glycerol-3-phosphate acyltransferase.